The chain runs to 344 residues: tRNA N6-adenosine threonylcarbamoyltransferase (344 aa).

2 residues coordinate Fe cation: His-119 and His-123. Substrate contacts are provided by residues 141 to 145 (VVSGG), Asp-174, Gly-187, Asp-191, and Asn-280. Residue Asp-310 participates in Fe cation binding.

This sequence belongs to the KAE1 / TsaD family. It depends on Fe(2+) as a cofactor.

Its subcellular location is the cytoplasm. The catalysed reaction is L-threonylcarbamoyladenylate + adenosine(37) in tRNA = N(6)-L-threonylcarbamoyladenosine(37) in tRNA + AMP + H(+). In terms of biological role, required for the formation of a threonylcarbamoyl group on adenosine at position 37 (t(6)A37) in tRNAs that read codons beginning with adenine. Is involved in the transfer of the threonylcarbamoyl moiety of threonylcarbamoyl-AMP (TC-AMP) to the N6 group of A37, together with TsaE and TsaB. TsaD likely plays a direct catalytic role in this reaction. This Listeria innocua serovar 6a (strain ATCC BAA-680 / CLIP 11262) protein is tRNA N6-adenosine threonylcarbamoyltransferase.